The sequence spans 600 residues: MNDLKRSLSEAAAAAFQAAGLPPEFGRVTASDRPDLADFQCNGALAAAKSAKRNPREIAVQVVDILKGDPRLASVEIAGVGFINMRVSDEALSARAREIASDDRTGAQLLETPRRVLIDYAGPNVAKPMHVGHLRASIIGESVKRLYRFRGDDVVGDAHFGDWGFQMGLLISAIMDEDPFINALMEKLPEAPRGFSSADEAKVMAEFEKRITLADLDRIYPAASVRQKEDPAFKERARKATAELQNGRFGYRLLWRHFVNVSRVALEREFHALGVDFDLWKGESDVNDLIEPMVLQLEAKGLLVQDQGARIVRVAREGDKRDVPPLLVVSSEGSAMYGTTDLATILDRRKSFDPHLILYCVDQRQADHFETVFRAAYLAGYAEEGALEHIGFGTMNGADGKPFKTRAGGVLKLHDLIEMAREKARERLREAGLGAELSEEQFEDTAHKVGVAALKFADLQNFRGTSYVFDLDRFTSFEGKTGPYLLYQSVRIKSVLRRAAESGAVAGRVEIHEPAERDLAMLLDAFEGALQEAYDKKAPNFVAEHAYKLAQSFSKFYAACPIMSADTETLRASRLTLAETTLRQLELALDLLGIEAPERM.

Positions 123–133 (PNVAKPMHVGH) match the 'HIGH' region motif.

Belongs to the class-I aminoacyl-tRNA synthetase family. As to quaternary structure, monomer.

Its subcellular location is the cytoplasm. It carries out the reaction tRNA(Arg) + L-arginine + ATP = L-arginyl-tRNA(Arg) + AMP + diphosphate. In Caulobacter vibrioides (strain NA1000 / CB15N) (Caulobacter crescentus), this protein is Arginine--tRNA ligase.